We begin with the raw amino-acid sequence, 621 residues long: tRNA uridine 5-carboxymethylaminomethyl modification enzyme MnmG (621 aa).

Residue 9–14 (GGGHAG) coordinates FAD. 270–284 (GPRYCPSIEDKIVKF) serves as a coordination point for NAD(+).

This sequence belongs to the MnmG family. In terms of assembly, homodimer. Heterotetramer of two MnmE and two MnmG subunits. FAD serves as cofactor.

The protein localises to the cytoplasm. NAD-binding protein involved in the addition of a carboxymethylaminomethyl (cmnm) group at the wobble position (U34) of certain tRNAs, forming tRNA-cmnm(5)s(2)U34. The sequence is that of tRNA uridine 5-carboxymethylaminomethyl modification enzyme MnmG from Borreliella afzelii (strain PKo) (Borrelia afzelii).